The following is a 552-amino-acid chain: 5'-AMP-activated protein kinase catalytic subunit alpha-2 (552 aa).

Residues 16–268 (YVLGDTLGVG…IKDIREHEWF (253 aa)) form the Protein kinase domain. ATP-binding positions include 22–30 (LGVGTFGKV) and Lys-45. The active-site Proton acceptor is the Asp-139. The residue at position 172 (Thr-172) is a Phosphothreonine; by LKB1 and CaMKK2. Residue Thr-258 is modified to Phosphothreonine. Residues 291–376 (EAVKEVCEKF…PERMPPLIAD (86 aa)) are AIS. Ser-377 carries the post-translational modification Phosphoserine. The interval 477-521 (VEQRSGSSTPQRSCSAAGLHRPRSSFDSTTAESHSLSGSLTGSLT) is disordered. The span at 480–490 (RSGSSTPQRSC) shows a compositional bias: polar residues. Residue Ser-491 is modified to Phosphoserine. Residues 501–510 (SFDSTTAESH) show a composition bias toward polar residues. Low complexity predominate over residues 511–521 (SLSGSLTGSLT).

It belongs to the protein kinase superfamily. CAMK Ser/Thr protein kinase family. SNF1 subfamily. AMPK is a heterotrimer of an alpha catalytic subunit (PRKAA1 or PRKAA2), a beta (PRKAB1 or PRKAB2) and a gamma non-catalytic subunits (PRKAG1, PRKAG2 or PRKAG3). Interacts with FNIP1 and FNIP2. Associates with internalized insulin receptor/INSR complexes on Golgi/endosomal membranes; PRKAA2/AMPK2 together with ATIC and HACD3/PTPLAD1 is proposed to be part of a signaling network regulating INSR autophosphorylation and endocytosis. Interacts with ARF6. The phosphorylated form at Thr-172 mediated by CamKK2 interacts with ACSS2. Mg(2+) serves as cofactor. Ubiquitinated. In terms of processing, phosphorylated at Thr-172 by STK11/LKB1 in complex with STE20-related adapter-alpha (STRADA) pseudo kinase and CAB39. Also phosphorylated at Thr-172 by CAMKK2; triggered by a rise in intracellular calcium ions, without detectable changes in the AMP/ATP ratio. CAMKK1 can also phosphorylate Thr-172, but at much lower level. Dephosphorylated by protein phosphatase 2A and 2C (PP2A and PP2C). Phosphorylated by ULK1; leading to negatively regulate AMPK activity and suggesting the existence of a regulatory feedback loop between ULK1 and AMPK. Dephosphorylated by PPM1A and PPM1B at Thr-172 (mediated by STK11/LKB1).

The protein localises to the cytoplasm. It is found in the nucleus. The enzyme catalyses L-seryl-[protein] + ATP = O-phospho-L-seryl-[protein] + ADP + H(+). It carries out the reaction L-threonyl-[protein] + ATP = O-phospho-L-threonyl-[protein] + ADP + H(+). It catalyses the reaction L-seryl-[acetyl-CoA carboxylase] + ATP = O-phospho-L-seryl-[acetyl-CoA carboxylase] + ADP + H(+). The catalysed reaction is L-seryl-[3-hydroxy-3-methylglutaryl-coenzyme A reductase] + ATP = O-phospho-L-seryl-[3-hydroxy-3-methylglutaryl-coenzyme A reductase] + ADP + H(+). With respect to regulation, activated by phosphorylation on Thr-172. Binding of AMP to non-catalytic gamma subunit (PRKAG1, PRKAG2 or PRKAG3) results in allosteric activation, inducing phosphorylation on Thr-172. AMP-binding to gamma subunit also sustains activity by preventing dephosphorylation of Thr-172. ADP also stimulates Thr-172 phosphorylation, without stimulating already phosphorylated AMPK. ATP promotes dephosphorylation of Thr-172, rendering the enzyme inactive. Under physiological conditions AMPK mainly exists in its inactive form in complex with ATP, which is much more abundant than AMP. AMPK is activated by antihyperglycemic drug metformin, a drug prescribed to patients with type 2 diabetes: in vivo, metformin seems to mainly inhibit liver gluconeogenesis. However, metformin can be used to activate AMPK in muscle and other cells in culture or ex vivo. Selectively inhibited by compound C (6-[4-(2-Piperidin-1-yl-ethoxy)-phenyl)]-3-pyridin-4-yl-pyyrazolo[1,5-a] pyrimidine. Activated by resveratrol, a natural polyphenol present in red wine, and S17834, a synthetic polyphenol. Salicylate/aspirin directly activates kinase activity, primarily by inhibiting Thr-172 dephosphorylation. In terms of biological role, catalytic subunit of AMP-activated protein kinase (AMPK), an energy sensor protein kinase that plays a key role in regulating cellular energy metabolism. In response to reduction of intracellular ATP levels, AMPK activates energy-producing pathways and inhibits energy-consuming processes: inhibits protein, carbohydrate and lipid biosynthesis, as well as cell growth and proliferation. AMPK acts via direct phosphorylation of metabolic enzymes, and by longer-term effects via phosphorylation of transcription regulators. Regulates lipid synthesis by phosphorylating and inactivating lipid metabolic enzymes such as ACACA, ACACB, GYS1, HMGCR and LIPE; regulates fatty acid and cholesterol synthesis by phosphorylating acetyl-CoA carboxylase (ACACA and ACACB) and hormone-sensitive lipase (LIPE) enzymes, respectively. Promotes lipolysis of lipid droplets by mediating phosphorylation of isoform 1 of CHKA (CHKalpha2). Regulates insulin-signaling and glycolysis by phosphorylating IRS1, PFKFB2 and PFKFB3. Involved in insulin receptor/INSR internalization. AMPK stimulates glucose uptake in muscle by increasing the translocation of the glucose transporter SLC2A4/GLUT4 to the plasma membrane, possibly by mediating phosphorylation of TBC1D4/AS160. Regulates transcription and chromatin structure by phosphorylating transcription regulators involved in energy metabolism such as CRTC2/TORC2, FOXO3, histone H2B, HDAC5, MEF2C, MLXIPL/ChREBP, EP300, HNF4A, p53/TP53, SREBF1, SREBF2 and PPARGC1A. Acts as a key regulator of glucose homeostasis in liver by phosphorylating CRTC2/TORC2, leading to CRTC2/TORC2 sequestration in the cytoplasm. In response to stress, phosphorylates 'Ser-36' of histone H2B (H2BS36ph), leading to promote transcription. Acts as a key regulator of cell growth and proliferation by phosphorylating FNIP1, TSC2, RPTOR, WDR24 and ATG1/ULK1: in response to nutrient limitation, negatively regulates the mTORC1 complex by phosphorylating RPTOR component of the mTORC1 complex and by phosphorylating and activating TSC2. Also phosphorylates and inhibits GATOR2 subunit WDR24 in response to nutrient limitation, leading to suppress glucose-mediated mTORC1 activation. In response to energetic stress, phosphorylates FNIP1, inactivating the non-canonical mTORC1 signaling, thereby promoting nuclear translocation of TFEB and TFE3, and inducing transcription of lysosomal or autophagy genes. In response to nutrient limitation, promotes autophagy by phosphorylating and activating ATG1/ULK1. In that process, it also activates WDR45/WIPI4. Phosphorylates CASP6, thereby preventing its autoprocessing and subsequent activation. AMPK also acts as a regulator of circadian rhythm by mediating phosphorylation of CRY1, leading to destabilize it. May regulate the Wnt signaling pathway by phosphorylating CTNNB1, leading to stabilize it. Also acts as a regulator of cellular polarity by remodeling the actin cytoskeleton; probably by indirectly activating myosin. Also phosphorylates CFTR, EEF2K, KLC1, NOS3 and SLC12A1. Plays an important role in the differential regulation of pro-autophagy (composed of PIK3C3, BECN1, PIK3R4 and UVRAG or ATG14) and non-autophagy (composed of PIK3C3, BECN1 and PIK3R4) complexes, in response to glucose starvation. Can inhibit the non-autophagy complex by phosphorylating PIK3C3 and can activate the pro-autophagy complex by phosphorylating BECN1. Upon glucose starvation, promotes ARF6 activation in a kinase-independent manner leading to cell migration. Upon glucose deprivation mediates the phosphorylation of ACSS2 at 'Ser-659', which exposes the nuclear localization signal of ACSS2, required for its interaction with KPNA1 and nuclear translocation. Upon stress, regulates mitochondrial fragmentation through phosphorylation of MTFR1L. In Homo sapiens (Human), this protein is 5'-AMP-activated protein kinase catalytic subunit alpha-2.